Consider the following 161-residue polypeptide: N5-carboxyaminoimidazole ribonucleotide mutase (161 aa).

Substrate is bound by residues Ser-9, Asp-12, and Arg-39.

This sequence belongs to the AIR carboxylase family. Class I subfamily.

It catalyses the reaction 5-carboxyamino-1-(5-phospho-D-ribosyl)imidazole + H(+) = 5-amino-1-(5-phospho-D-ribosyl)imidazole-4-carboxylate. The protein operates within purine metabolism; IMP biosynthesis via de novo pathway; 5-amino-1-(5-phospho-D-ribosyl)imidazole-4-carboxylate from 5-amino-1-(5-phospho-D-ribosyl)imidazole (N5-CAIR route): step 2/2. Catalyzes the conversion of N5-carboxyaminoimidazole ribonucleotide (N5-CAIR) to 4-carboxy-5-aminoimidazole ribonucleotide (CAIR). The protein is N5-carboxyaminoimidazole ribonucleotide mutase of Aliivibrio fischeri (strain ATCC 700601 / ES114) (Vibrio fischeri).